Here is a 377-residue protein sequence, read N- to C-terminus: Protein RecA (377 aa).

Residue 66–73 (GPESSGKT) participates in ATP binding. The tract at residues 329–377 (VGVRPEEPTAEPGADAAVTSAAAATDDTAKTVSAPAAKTTKSKAAAAKS) is disordered. Positions 342–377 (ADAAVTSAAAATDDTAKTVSAPAAKTTKSKAAAAKS) are enriched in low complexity.

It belongs to the RecA family.

It localises to the cytoplasm. Functionally, can catalyze the hydrolysis of ATP in the presence of single-stranded DNA, the ATP-dependent uptake of single-stranded DNA by duplex DNA, and the ATP-dependent hybridization of homologous single-stranded DNAs. It interacts with LexA causing its activation and leading to its autocatalytic cleavage. The sequence is that of Protein RecA from Streptomyces avermitilis (strain ATCC 31267 / DSM 46492 / JCM 5070 / NBRC 14893 / NCIMB 12804 / NRRL 8165 / MA-4680).